Reading from the N-terminus, the 470-residue chain is UDP-N-acetylmuramate--L-alanine ligase (470 aa).

118–124 lines the ATP pocket; that stretch reads GTHGKTT.

It belongs to the MurCDEF family.

It is found in the cytoplasm. It catalyses the reaction UDP-N-acetyl-alpha-D-muramate + L-alanine + ATP = UDP-N-acetyl-alpha-D-muramoyl-L-alanine + ADP + phosphate + H(+). The protein operates within cell wall biogenesis; peptidoglycan biosynthesis. Its function is as follows. Cell wall formation. In Cereibacter sphaeroides (strain KD131 / KCTC 12085) (Rhodobacter sphaeroides), this protein is UDP-N-acetylmuramate--L-alanine ligase.